A 122-amino-acid chain; its full sequence is Protein TCL1B3 (122 aa).

Belongs to the TCL1 family.

The protein is Protein TCL1B3 (Tcl1b3) of Mus musculus (Mouse).